Consider the following 155-residue polypeptide: Ribosome maturation factor RimP (155 aa).

This sequence belongs to the RimP family.

The protein localises to the cytoplasm. Its function is as follows. Required for maturation of 30S ribosomal subunits. The protein is Ribosome maturation factor RimP of Salinibacter ruber (strain DSM 13855 / M31).